A 373-amino-acid polypeptide reads, in one-letter code: Lipoyl synthase (373 aa).

A disordered region spans residues 14 to 36 (VSNDHPSSSPLQPGVKQSGEDKI). [4Fe-4S] cluster-binding residues include Cys-81, Cys-86, Cys-92, Cys-107, Cys-111, Cys-114, and Ser-323. The Radical SAM core domain maps to 93 to 312 (FSHGTATFMI…EEYGMALGFS (220 aa)). The segment at 346–373 (PAVSSTEHRERNTIASKSASKTESIHHR) is disordered. A compositionally biased stretch (polar residues) spans 358–367 (TIASKSASKT).

This sequence belongs to the radical SAM superfamily. Lipoyl synthase family. It depends on [4Fe-4S] cluster as a cofactor.

Its subcellular location is the cytoplasm. It carries out the reaction [[Fe-S] cluster scaffold protein carrying a second [4Fe-4S](2+) cluster] + N(6)-octanoyl-L-lysyl-[protein] + 2 oxidized [2Fe-2S]-[ferredoxin] + 2 S-adenosyl-L-methionine + 4 H(+) = [[Fe-S] cluster scaffold protein] + N(6)-[(R)-dihydrolipoyl]-L-lysyl-[protein] + 4 Fe(3+) + 2 hydrogen sulfide + 2 5'-deoxyadenosine + 2 L-methionine + 2 reduced [2Fe-2S]-[ferredoxin]. Its pathway is protein modification; protein lipoylation via endogenous pathway; protein N(6)-(lipoyl)lysine from octanoyl-[acyl-carrier-protein]: step 2/2. Functionally, catalyzes the radical-mediated insertion of two sulfur atoms into the C-6 and C-8 positions of the octanoyl moiety bound to the lipoyl domains of lipoate-dependent enzymes, thereby converting the octanoylated domains into lipoylated derivatives. The polypeptide is Lipoyl synthase (Xylella fastidiosa (strain M23)).